A 481-amino-acid chain; its full sequence is ATP synthase subunit beta, chloroplastic (481 aa).

161 to 168 (GGAGVGKT) is an ATP binding site.

Belongs to the ATPase alpha/beta chains family. In terms of assembly, F-type ATPases have 2 components, CF(1) - the catalytic core - and CF(0) - the membrane proton channel. CF(1) has five subunits: alpha(3), beta(3), gamma(1), delta(1), epsilon(1). CF(0) has four main subunits: a(1), b(1), b'(1) and c(9-12).

It localises to the plastid. The protein resides in the chloroplast thylakoid membrane. It catalyses the reaction ATP + H2O + 4 H(+)(in) = ADP + phosphate + 5 H(+)(out). Functionally, produces ATP from ADP in the presence of a proton gradient across the membrane. The catalytic sites are hosted primarily by the beta subunits. This is ATP synthase subunit beta, chloroplastic from Dictyota dichotoma.